Reading from the N-terminus, the 203-residue chain is Cilia- and flagella-associated protein 20 (203 aa).

This sequence belongs to the CFAP20 family.

It localises to the nucleus. The protein resides in the cytoplasm. Its subcellular location is the cytoskeleton. The protein localises to the microtubule organizing center. It is found in the centrosome. It localises to the centriole. The protein resides in the cilium basal body. Its subcellular location is the cilium axoneme. In terms of biological role, cilium- and flagellum-specific protein that plays a role in axonemal structure organization and motility. Microtubule inner protein (MIP) part of the dynein-decorated doublet microtubules (DMTs) in cilia axoneme, which is required for motile cilia beating. Involved in the regulation of the size and morphology of cilia. Required for axonemal microtubules polyglutamylation. The protein is Cilia- and flagella-associated protein 20 of Caenorhabditis briggsae.